A 236-amino-acid chain; its full sequence is Phosphoribosylaminoimidazole-succinocarboxamide synthase (236 aa).

Belongs to the SAICAR synthetase family.

The catalysed reaction is 5-amino-1-(5-phospho-D-ribosyl)imidazole-4-carboxylate + L-aspartate + ATP = (2S)-2-[5-amino-1-(5-phospho-beta-D-ribosyl)imidazole-4-carboxamido]succinate + ADP + phosphate + 2 H(+). It functions in the pathway purine metabolism; IMP biosynthesis via de novo pathway; 5-amino-1-(5-phospho-D-ribosyl)imidazole-4-carboxamide from 5-amino-1-(5-phospho-D-ribosyl)imidazole-4-carboxylate: step 1/2. The sequence is that of Phosphoribosylaminoimidazole-succinocarboxamide synthase (purC) from Rickettsia prowazekii (strain Madrid E).